Reading from the N-terminus, the 210-residue chain is Urease accessory protein UreF (210 aa).

It belongs to the UreF family. In terms of assembly, ureD, UreF and UreG form a complex that acts as a GTP-hydrolysis-dependent molecular chaperone, activating the urease apoprotein by helping to assemble the nickel containing metallocenter of UreC. The UreE protein probably delivers the nickel.

Its subcellular location is the cytoplasm. Functionally, required for maturation of urease via the functional incorporation of the urease nickel metallocenter. The protein is Urease accessory protein UreF of Cereibacter sphaeroides (strain ATCC 17023 / DSM 158 / JCM 6121 / CCUG 31486 / LMG 2827 / NBRC 12203 / NCIMB 8253 / ATH 2.4.1.) (Rhodobacter sphaeroides).